The sequence spans 395 residues: MALPGYPLGNVDDSRSKDSPAGEPQGQVPLTADVLAVSSSVASTDWQDIDQASFKTATPRAISTSGDKDKSAVVPEHGQKTPRKITPLLPSQNPSPLQVSMSLQNPAWDRQVQDARTSQSLVVFPSHLLGKDKMSQMASVPEREPESAPSAPSAELQSTQHMEAQPVESDADHVTAGANGQHGPQAASTTKSAEEKAEHPKAPHPEAEALPSDESPVAMGANVVDSLGDLQTWFFPPPPAGSVSPSPGPHEVALGRRPLDSSLYTASEENSYMRSMTSLLDRGEGSISSLADILVWSETTMGMAIATGFLDSGHSTVADLLHSSGPSLRSVPSLVGSVSSAFSSGLVSGTSSALRTITRVLETVEQRTVEGIRSAMRYLTSHLTPRQAQADPNYD.

4 disordered regions span residues 1–32 (MALP…PLTA), 46–100 (WQDI…LQVS), 133–215 (KMSQ…SDES), and 235–258 (FPPP…GRRP). Residues 53 to 65 (SFKTATPRAISTS) show a composition bias toward polar residues. Low complexity predominate over residues 87–98 (PLLPSQNPSPLQ). A compositionally biased stretch (basic and acidic residues) spans 192 to 207 (SAEEKAEHPKAPHPEA). S333 bears the Phosphoserine mark.

In terms of tissue distribution, testis. Detected in germ cells at all stages of the seminiferous epithelium, strong expression in elongating spermatids (at protein level).

The protein localises to the cytoplasm. The protein is Testis-expressed protein 44 of Homo sapiens (Human).